We begin with the raw amino-acid sequence, 261 residues long: LALLALLALFVSATNAFIIPQCSLAPSAIIPQFLPPVTSMGFEHLAVQAYRLQQALAASVLQQPINQLQQQSLAHLTIQTIATQQQQQFLPSVSQLDVVNPVAYLQQQLLASNPLALANVAAYQQQQQLQQFLPALSQLAMVNPAAYLQQQQLLSSSPLAVGNAPTYLQQQLLQQIVPALTQLAVANPAAYLQQLLPFNQLTVSNSAAYLQQRQQLLNPLEVPNPLVAGFLQQQQLLPYSQFSLMNPALSWQQPIVGGAIF.

Residues 1 to 16 form the signal peptide; it reads LALLALLALFVSATNA.

It belongs to the zein family.

Zeins are major seed storage proteins. This Zea mays (Maize) protein is 22 kDa alpha-zein 8b.